A 669-amino-acid polypeptide reads, in one-letter code: DNA ligase (669 aa).

NAD(+)-binding positions include 31-35, 80-81, and Glu-112; these read DSVYD and SL. Lys-114 (N6-AMP-lysine intermediate) is an active-site residue. 4 residues coordinate NAD(+): Arg-135, Glu-172, Lys-289, and Lys-313. 4 residues coordinate Zn(2+): Cys-407, Cys-410, Cys-425, and Cys-430. Residues 591–669 form the BRCT domain; that stretch reads TDSGKLKGKT…EAEFLQLLEP (79 aa).

This sequence belongs to the NAD-dependent DNA ligase family. LigA subfamily. Requires Mg(2+) as cofactor. Mn(2+) is required as a cofactor.

The catalysed reaction is NAD(+) + (deoxyribonucleotide)n-3'-hydroxyl + 5'-phospho-(deoxyribonucleotide)m = (deoxyribonucleotide)n+m + AMP + beta-nicotinamide D-nucleotide.. In terms of biological role, DNA ligase that catalyzes the formation of phosphodiester linkages between 5'-phosphoryl and 3'-hydroxyl groups in double-stranded DNA using NAD as a coenzyme and as the energy source for the reaction. It is essential for DNA replication and repair of damaged DNA. The chain is DNA ligase from Synechocystis sp. (strain ATCC 27184 / PCC 6803 / Kazusa).